The sequence spans 388 residues: Autophagy-related protein 21 (388 aa).

WD repeat units lie at residues 179–219 and 224–263; these read CHRS…KVHE and SYTA…RRRS. Positions 220–224 match the L/FRRG motif motif; that stretch reads FRRGS.

Belongs to the WD repeat PROPPIN family.

The protein localises to the cytoplasm. Its subcellular location is the membrane. The protein resides in the vacuole membrane. Functionally, involved in peroxisome sequestration to the vacuole during macropexophagy. Also required for microautophagy. The chain is Autophagy-related protein 21 (ATG21) from Pichia angusta (Yeast).